The following is a 1953-amino-acid chain: Protein BNI1 (1953 aa).

4 disordered regions span residues 1 to 152, 230 to 258, 263 to 282, and 287 to 306; these read MLKN…ASSL, MRANTTSSSTASRTSMASDHHPILTANSS, KSVLMTSASSPTSTVYSNSL, and TLSSVGTSTSKGKKLVSGSL. Residues 31-40 show a composition bias toward low complexity; the sequence is ANSNATNSNT. 2 stretches are compositionally biased toward polar residues: residues 41 to 100 and 110 to 143; these read GSPT…SQYM and VSSQHARSHSMQSKYSYSKRNSSQASNKLTRQHT. The region spanning 174–696 is the GBD/FH3 domain; the sequence is EMPSDPYEVE…NVSVASTSDE (523 aa). A compositionally biased stretch (low complexity) spans 232–246; it reads ANTTSSSTASRTSMA. The segment covering 263–278 has biased composition (polar residues); the sequence is KSVLMTSASSPTSTVY. 2 positions are modified to phosphoserine: Ser-311 and Ser-325. A disordered region spans residues 312–337; the sequence is LNNIYRGGAENNTSASTLPGDRTNRP. 3 coiled-coil regions span residues 712-807, 864-894, and 928-981; these read QTDE…TILN, NKRLKMLRMQMENIENEARQLEMTNFAEFEK, and NKLN…YKGF. Disordered stretches follow at residues 990–1014, 1040–1094, and 1149–1330; these read IMDSPKKNTGDVETEEDANYASLDP, HEIQ…LDAL, and TQKV…MPAS. The region spanning 1053–1337 is the FH1 domain; the sequence is SSSSSDDESE…PASQIKSAVT (285 aa). 2 positions are modified to phosphoserine: Ser-1085 and Ser-1170. A compositionally biased stretch (basic and acidic residues) spans 1184-1211; sequence DKAEKDMRQHVENGKQGRVVNHEEDKTA. Residues 1217-1237 are compositionally biased toward polar residues; the sequence is SKLNNTDGAEDLSTQSSVLSS. Residues 1238–1250 are compositionally biased toward pro residues; the sequence is QPPPPPPPPPPVP. Positions 1257–1270 are enriched in basic and acidic residues; that stretch reads SLEKEKKSEDDTVK. A compositionally biased stretch (pro residues) spans 1278–1292; that stretch reads PAPPPPPPPPPPPPM. Ser-1338 and Ser-1344 each carry phosphoserine. Residues 1348–1766 enclose the FH2 domain; it reads FEKYPRPHKK…YIKHKKIVEE (419 aa). Residues 1732–1811 adopt a coiled-coil conformation; that stretch reads KFADFINEYK…DKLLEQLKNA (80 aa). Basic and acidic residues predominate over residues 1768–1779; that stretch reads QKRAQEKEKQKE. Disordered stretches follow at residues 1768–1797, 1809–1844, and 1872–1899; these read QKRAQEKEKQKENSNSPSSEGNEEDEAEDR, KNAGPAKSDPSSARKRALVRKKYLSEKDNAPQLLND, and PTPLATRGVMNTSEDLPSPSKTSALEDQ. The 35-residue stretch at 1792 to 1826 folds into the DAD domain; it reads DEAEDRRAVMDKLLEQLKNAGPAKSDPSSARKRAL. The span at 1821–1830 shows a compositional bias: basic residues; sequence ARKRALVRKK. The segment covering 1880 to 1896 has biased composition (polar residues); the sequence is VMNTSEDLPSPSKTSAL. The residue at position 1918 (Thr-1918) is a Phosphothreonine.

It belongs to the formin homology family. BNI1 subfamily. As to quaternary structure, homodimer, and possibly also homotetramer. Interacts with PFY1 via the FH1 domain and with actin via the FH2 domain.

It localises to the cell membrane. The protein localises to the cell projection. Its subcellular location is the ruffle membrane. The protein resides in the cytoplasm. It is found in the cytoskeleton. Required for the assembly of F-actin structures, such as actin cables and stress fibers. Nucleates actin filaments. Binds to the barbed end of the actin filament and acts as a leaky capper, slowing both polymerization and depolymerization. Protects the growing actin fiber from tight capping proteins and so increases the time of elongation and the total amount of F-actin. May organize microtubules by mediating spindle positioning and movement in the budding process. Potential target of the RHO family members. This is Protein BNI1 (BNI1) from Saccharomyces cerevisiae (strain ATCC 204508 / S288c) (Baker's yeast).